A 164-amino-acid polypeptide reads, in one-letter code: OV-17 antigen (164 aa).

The signal sequence occupies residues 1–16 (MKFVILLTIGLLVVAA). The interval 24-43 (QQQQQQQQQRDEREIPPFLE) is disordered.

The protein belongs to the SXP/RAL-2 family. As to expression, high levels in the hypodermal layer of the adult female.

The chain is OV-17 antigen (OV17) from Onchocerca volvulus.